The sequence spans 63 residues: Small ribosomal subunit protein bS21 (63 aa).

It belongs to the bacterial ribosomal protein bS21 family.

The polypeptide is Small ribosomal subunit protein bS21 (Porphyromonas gingivalis (strain ATCC 33277 / DSM 20709 / CIP 103683 / JCM 12257 / NCTC 11834 / 2561)).